Here is a 201-residue protein sequence, read N- to C-terminus: Large ribosomal subunit protein bL9 (201 aa).

A compositionally biased stretch (basic and acidic residues) spans 150–165 (EAERQAAGEDLTQRRD). Positions 150–201 (EAERQAAGEDLTQRRDDEEEEAVEAAEFFESEELAPGDEEEEAAGEEEDAKE) are disordered. The span at 166–201 (DEEEEAVEAAEFFESEELAPGDEEEEAAGEEEDAKE) shows a compositional bias: acidic residues.

Belongs to the bacterial ribosomal protein bL9 family.

Binds to the 23S rRNA. The protein is Large ribosomal subunit protein bL9 of Parvibaculum lavamentivorans (strain DS-1 / DSM 13023 / NCIMB 13966).